The chain runs to 937 residues: Periplasmic nitrate reductase (937 aa).

Residues Met-1–Ala-42 constitute a signal peptide (tat-type signal). In terms of domain architecture, 4Fe-4S Mo/W bis-MGD-type spans Trp-49–Asp-110. Residues Cys-56, Cys-59, Cys-63, and Cys-96 each contribute to the [4Fe-4S] cluster site. Mo-bis(molybdopterin guanine dinucleotide) is bound by residues Lys-98, Gln-166, Asn-191, Cys-195, Trp-228–Met-235, Met-433, Gln-437, Asn-543, Ser-568–Glu-569, Lys-591, Asp-618, and Thr-827–Ser-836. Trp-903 lines the substrate pocket. Residues Asn-911 and Lys-928 each coordinate Mo-bis(molybdopterin guanine dinucleotide).

This sequence belongs to the prokaryotic molybdopterin-containing oxidoreductase family. NasA/NapA/NarB subfamily. As to quaternary structure, component of the periplasmic nitrate reductase NapAB complex composed of NapA and NapB. It depends on [4Fe-4S] cluster as a cofactor. The cofactor is Mo-bis(molybdopterin guanine dinucleotide). Post-translationally, predicted to be exported by the Tat system. The position of the signal peptide cleavage has not been experimentally proven.

The protein localises to the periplasm. The catalysed reaction is 2 Fe(II)-[cytochrome] + nitrate + 2 H(+) = 2 Fe(III)-[cytochrome] + nitrite + H2O. Functionally, catalytic subunit of the periplasmic nitrate reductase complex NapAB. Receives electrons from NapB and catalyzes the reduction of nitrate to nitrite. The polypeptide is Periplasmic nitrate reductase (Helicobacter hepaticus (strain ATCC 51449 / 3B1)).